The chain runs to 361 residues: Phospho-N-acetylmuramoyl-pentapeptide-transferase (361 aa).

10 consecutive transmembrane segments (helical) span residues arginine 25–isoleucine 45, threonine 73–leucine 93, valine 98–isoleucine 118, isoleucine 139–threonine 159, isoleucine 168–phenylalanine 188, glycine 200–serine 220, alanine 237–phenylalanine 257, valine 264–isoleucine 284, leucine 289–valine 309, and valine 339–lysine 359.

This sequence belongs to the glycosyltransferase 4 family. MraY subfamily. The cofactor is Mg(2+).

The protein resides in the cell inner membrane. It catalyses the reaction UDP-N-acetyl-alpha-D-muramoyl-L-alanyl-gamma-D-glutamyl-meso-2,6-diaminopimeloyl-D-alanyl-D-alanine + di-trans,octa-cis-undecaprenyl phosphate = di-trans,octa-cis-undecaprenyl diphospho-N-acetyl-alpha-D-muramoyl-L-alanyl-D-glutamyl-meso-2,6-diaminopimeloyl-D-alanyl-D-alanine + UMP. It participates in cell wall biogenesis; peptidoglycan biosynthesis. Functionally, catalyzes the initial step of the lipid cycle reactions in the biosynthesis of the cell wall peptidoglycan: transfers peptidoglycan precursor phospho-MurNAc-pentapeptide from UDP-MurNAc-pentapeptide onto the lipid carrier undecaprenyl phosphate, yielding undecaprenyl-pyrophosphoryl-MurNAc-pentapeptide, known as lipid I. This is Phospho-N-acetylmuramoyl-pentapeptide-transferase from Xanthomonas campestris pv. campestris (strain 8004).